Consider the following 305-residue polypeptide: MPDVVDVLDLDKKDMIKIFELAEDIEYKKLHKSKWCALENKTVSLLFVEPSTRTRLSFEESAKRLCAHTLTIVGEEASSFVKGESLYDTIKVLDKISDIIVIRHNLDGSAKYASEVAANPVINAGDGKNQHPTQSLIDLYVVRKRKGGLEDLRYAVVGDLRYARTARSFLLALTKFKPRSVYLVAPEVLKPSIKFLEELKSMGLNVFEVDRLEDVIPNVDVIYVTRIQKERFPDPSEYEKVKGSYKITLDLIKRGKGDLIVLHPLPRVDELDVRIDSTPHAAYFDQVAASVPVRMATLAWSAGVV.

Carbamoyl phosphate contacts are provided by R53 and T54. K82 lines the L-aspartate pocket. 3 residues coordinate carbamoyl phosphate: R103, H131, and Q134. L-aspartate contacts are provided by R164 and R226. The carbamoyl phosphate site is built by L265 and P266.

The protein belongs to the aspartate/ornithine carbamoyltransferase superfamily. ATCase family. Heterooligomer of catalytic and regulatory chains.

The catalysed reaction is carbamoyl phosphate + L-aspartate = N-carbamoyl-L-aspartate + phosphate + H(+). It participates in pyrimidine metabolism; UMP biosynthesis via de novo pathway; (S)-dihydroorotate from bicarbonate: step 2/3. Catalyzes the condensation of carbamoyl phosphate and aspartate to form carbamoyl aspartate and inorganic phosphate, the committed step in the de novo pyrimidine nucleotide biosynthesis pathway. This Ignicoccus hospitalis (strain KIN4/I / DSM 18386 / JCM 14125) protein is Aspartate carbamoyltransferase catalytic subunit.